Consider the following 463-residue polypeptide: NADH dehydrogenase [ubiquinone] iron-sulfur protein 2, mitochondrial (463 aa).

The transit peptide at 1–33 directs the protein to the mitochondrion; sequence MAALRVLCGLRGVAAQVLRPGAGVRLPIQPSRG. The residue at position 62 (Lys-62) is an N6-acetyllysine. At Arg-118 the chain carries Symmetric dimethylarginine. Residues Cys-326, Cys-332, and Cys-347 each coordinate [4Fe-4S] cluster.

The protein belongs to the complex I 49 kDa subunit family. As to quaternary structure, core subunit of respiratory chain NADH dehydrogenase (Complex I) which is composed of 45 different subunits. Component of the iron-sulfur (IP) fragment of the enzyme. Interacts with NDUFAF3. Interacts with NDUFAF7. Interacts with CERS2. [4Fe-4S] cluster serves as cofactor. Dimethylation at Arg-118 by NDUFAF7 takes place after NDUFS2 assembles into the complex I, leading to stabilize the early intermediate complex.

It localises to the mitochondrion inner membrane. The enzyme catalyses a ubiquinone + NADH + 5 H(+)(in) = a ubiquinol + NAD(+) + 4 H(+)(out). Its function is as follows. Core subunit of the mitochondrial membrane respiratory chain NADH dehydrogenase (Complex I) which catalyzes electron transfer from NADH through the respiratory chain, using ubiquinone as an electron acceptor. Essential for the catalytic activity and assembly of complex I. Redox-sensitive, critical component of the oxygen-sensing pathway in the pulmonary vasculature which plays a key role in acute pulmonary oxygen-sensing and hypoxic pulmonary vasoconstriction. Plays an important role in carotid body sensing of hypoxia. Essential for glia-like neural stem and progenitor cell proliferation, differentiation and subsequent oligodendrocyte or neuronal maturation. The protein is NADH dehydrogenase [ubiquinone] iron-sulfur protein 2, mitochondrial (NDUFS2) of Gorilla gorilla gorilla (Western lowland gorilla).